The primary structure comprises 261 residues: Probable septum site-determining protein MinC (261 aa).

The segment at 106–144 (RAPAAKPADEAEPAAVPAVETAAAPAAAAAPEQSSDPAP) is disordered. Over residues 118 to 144 (PAAVPAVETAAAPAAAAAPEQSSDPAP) the composition is skewed to low complexity.

The protein belongs to the MinC family. Interacts with MinD and FtsZ.

Its function is as follows. Cell division inhibitor that blocks the formation of polar Z ring septums. Rapidly oscillates between the poles of the cell to destabilize FtsZ filaments that have formed before they mature into polar Z rings. Prevents FtsZ polymerization. This Burkholderia orbicola (strain MC0-3) protein is Probable septum site-determining protein MinC.